Reading from the N-terminus, the 368-residue chain is Nicotinate-nucleotide--dimethylbenzimidazole phosphoribosyltransferase (368 aa).

The active-site Proton acceptor is E314. Residues 344 to 368 (DRADGADNSADSGASAGTVASDPTV) form a disordered region. Residues 349-360 (ADNSADSGASAG) show a composition bias toward low complexity.

Belongs to the CobT family.

It catalyses the reaction 5,6-dimethylbenzimidazole + nicotinate beta-D-ribonucleotide = alpha-ribazole 5'-phosphate + nicotinate + H(+). It participates in nucleoside biosynthesis; alpha-ribazole biosynthesis; alpha-ribazole from 5,6-dimethylbenzimidazole: step 1/2. In terms of biological role, catalyzes the synthesis of alpha-ribazole-5'-phosphate from nicotinate mononucleotide (NAMN) and 5,6-dimethylbenzimidazole (DMB). This chain is Nicotinate-nucleotide--dimethylbenzimidazole phosphoribosyltransferase, found in Corynebacterium efficiens (strain DSM 44549 / YS-314 / AJ 12310 / JCM 11189 / NBRC 100395).